The following is a 322-amino-acid chain: Malate dehydrogenase (322 aa).

NAD(+) is bound by residues G10–G15 and D34. Residues R83 and R89 each contribute to the substrate site. NAD(+) is bound by residues N96 and I119–N121. 2 residues coordinate substrate: N121 and R152. The active-site Proton acceptor is H176.

The protein belongs to the LDH/MDH superfamily. MDH type 3 family.

The catalysed reaction is (S)-malate + NAD(+) = oxaloacetate + NADH + H(+). Functionally, catalyzes the reversible oxidation of malate to oxaloacetate. This Rhodopseudomonas palustris (strain HaA2) protein is Malate dehydrogenase.